Reading from the N-terminus, the 838-residue chain is Probable inorganic carbon transporter subunit DabA (838 aa).

Residues cysteine 353, aspartate 355, histidine 537, and cysteine 552 each coordinate Zn(2+).

This sequence belongs to the inorganic carbon transporter (TC 9.A.2) DabA family. In terms of assembly, forms a complex with DabB. Zn(2+) is required as a cofactor.

Its subcellular location is the cell membrane. Its function is as follows. Part of an energy-coupled inorganic carbon pump. The protein is Probable inorganic carbon transporter subunit DabA of Chloroflexus aurantiacus (strain ATCC 29366 / DSM 635 / J-10-fl).